The following is a 380-amino-acid chain: Cytochrome b (380 aa).

Helical transmembrane passes span 33–53 (FGSLLGICLVLQILTGLFLAM), 77–98 (WFIRYLHANGASMFFICLYIHV), 113–133 (WNVGIILLFTVMATAFMGYVL), and 178–198 (FFAFHFILPFIIVALVMVHLL). 2 residues coordinate heme b: histidine 83 and histidine 97. Residues histidine 182 and histidine 196 each contribute to the heme b site. Histidine 201 is an a ubiquinone binding site. The next 4 membrane-spanning stretches (helical) occupy residues 226–246 (TKDILGVLLLILFLISLVLFA), 288–308 (LGGVLALITSILTLTLLPYLY), 320–340 (LTQLCYWMLVSDIMILTWIGA), and 347–367 (FITIGQVASILYFTIIIILMP).

The protein belongs to the cytochrome b family. As to quaternary structure, the cytochrome bc1 complex contains 11 subunits: 3 respiratory subunits (MT-CYB, CYC1 and UQCRFS1), 2 core proteins (UQCRC1 and UQCRC2) and 6 low-molecular weight proteins (UQCRH/QCR6, UQCRB/QCR7, UQCRQ/QCR8, UQCR10/QCR9, UQCR11/QCR10 and a cleavage product of UQCRFS1). This cytochrome bc1 complex then forms a dimer. Heme b is required as a cofactor.

It is found in the mitochondrion inner membrane. Functionally, component of the ubiquinol-cytochrome c reductase complex (complex III or cytochrome b-c1 complex) that is part of the mitochondrial respiratory chain. The b-c1 complex mediates electron transfer from ubiquinol to cytochrome c. Contributes to the generation of a proton gradient across the mitochondrial membrane that is then used for ATP synthesis. The protein is Cytochrome b (MT-CYB) of Cricetomys emini (Emin's giant pouched rat).